The primary structure comprises 54 residues: MLYYALVFFIIAIVAAVFGFSGIAAGAVGIAKILFVVFLIMAIATFVVNLLRGR.

Helical transmembrane passes span 5-25 and 28-48; these read ALVFFIIAIVAAVFGFSGIAA and VGIAKILFVVFLIMAIATFVV.

This sequence belongs to the UPF0391 family.

It is found in the cell membrane. The polypeptide is UPF0391 membrane protein Tbd_2238 (Thiobacillus denitrificans (strain ATCC 25259 / T1)).